The sequence spans 591 residues: MNMEITNLKSYKELVTLSAEEKTKDLKDYLNDKNRSESLIKKFKNFYMDLSRQRYSEKTLNKLVEYAEEVELKKKVEKTFMGEKVNMTENRSVLHTALRIPIEKINTHKIIIDNKNVLEDVHGVLKKIEKYSDDIRNGVIKTCKNTKFKNVICIGIGGSYLGTEFVYEAMKYYYYNMELNKNEKDQVNNFNNNYDQDNVFNVRFLANVDPNDVNRAIQNLDQYDTLVIIISKTFTTAETMLNARSIKKWLSLKIKDDENLSKHMVAVSTNLKLTDEFGISRDNVFEFWDWVGGRFSVTSSVGILPLSIAFGYKNMRNFLNGCHDMDEHFLHADLKENIPVLLALTSFYNSHFFDYKNVAILPYFQNLLKFSAHIQQLSMESNGKSVDRNNQPIHYNTCQVYFGEPGTNGQHSFYQLIHQGQVIPVELIGFKHSHFPIKFDKEVVSNHDELMTNFFAQADALAIGKTYEQVKEENEKNKMSPELLTHKVFNGNRPSTLLLFDELNFYTCGLLLSLYESRIVAEGFLLNINSFDQWGVELGKVLAKEVRNYFNDTRNQKKSDNTYNFNESTKNFIKLLLVQIKKKKKINTNLK.

E380 acts as the Proton donor in catalysis. Residues H411 and K540 contribute to the active site.

It belongs to the GPI family. In terms of assembly, homodimer.

The protein localises to the cytoplasm. It carries out the reaction alpha-D-glucose 6-phosphate = beta-D-fructose 6-phosphate. Its pathway is carbohydrate degradation; glycolysis; D-glyceraldehyde 3-phosphate and glycerone phosphate from D-glucose: step 2/4. This Plasmodium falciparum protein is Glucose-6-phosphate isomerase (GGI.R1).